The sequence spans 326 residues: Putative HTH-type transcriptional regulatory protein MMP0678 (326 aa).

The 56-residue stretch at 128–183 (LRETREKLKISVGELAEVSRVSRKTIYKYEQNEANPSAEVAIKIEEYLDVPLIKGI) folds into the HTH cro/C1-type domain. A DNA-binding region (H-T-H motif) is located at residues 139-158 (VGELAEVSRVSRKTIYKYEQ).

This chain is Putative HTH-type transcriptional regulatory protein MMP0678, found in Methanococcus maripaludis (strain DSM 14266 / JCM 13030 / NBRC 101832 / S2 / LL).